The primary structure comprises 152 residues: Transcriptional regulator MraZ (152 aa).

2 consecutive SpoVT-AbrB domains span residues 5-51 (VNSI…PLPE) and 80-123 (AAEC…DEVL).

The protein belongs to the MraZ family. In terms of assembly, forms oligomers.

The protein resides in the cytoplasm. The protein localises to the nucleoid. The protein is Transcriptional regulator MraZ of Methylococcus capsulatus (strain ATCC 33009 / NCIMB 11132 / Bath).